A 291-amino-acid chain; its full sequence is ATP phosphoribosyltransferase (291 aa).

Belongs to the ATP phosphoribosyltransferase family. Long subfamily. Mg(2+) is required as a cofactor.

The protein resides in the cytoplasm. It catalyses the reaction 1-(5-phospho-beta-D-ribosyl)-ATP + diphosphate = 5-phospho-alpha-D-ribose 1-diphosphate + ATP. Its pathway is amino-acid biosynthesis; L-histidine biosynthesis; L-histidine from 5-phospho-alpha-D-ribose 1-diphosphate: step 1/9. Feedback inhibited by histidine. In terms of biological role, catalyzes the condensation of ATP and 5-phosphoribose 1-diphosphate to form N'-(5'-phosphoribosyl)-ATP (PR-ATP). Has a crucial role in the pathway because the rate of histidine biosynthesis seems to be controlled primarily by regulation of HisG enzymatic activity. The polypeptide is ATP phosphoribosyltransferase (Trichlorobacter lovleyi (strain ATCC BAA-1151 / DSM 17278 / SZ) (Geobacter lovleyi)).